Reading from the N-terminus, the 57-residue chain is Large ribosomal subunit protein bL32 (57 aa).

It belongs to the bacterial ribosomal protein bL32 family.

This chain is Large ribosomal subunit protein bL32, found in Mycolicibacterium gilvum (strain PYR-GCK) (Mycobacterium gilvum (strain PYR-GCK)).